Here is a 4690-residue protein sequence, read N- to C-terminus: Nonribosomal peptide synthetase sidN (4690 aa).

The segment at 238–656 (ARVRENPGRI…LGRLSSDQIK (419 aa)) is adenylation 1. The region spanning 779–856 (SSSIPMLQSV…DLDTKAQQAL (78 aa)) is the Carrier 1 domain. Ser816 carries the O-(pantetheine 4'-phosphoryl)serine modification. Positions 925 to 1175 (PGGKAFIQHT…AFGNTMSGRF (251 aa)) are condensation 1. Residues 1349-1760 (EFAQKSPNAI…GRKDDLVKIR (412 aa)) form an adenylation 2 region. The Carrier 2 domain occupies 1889–1965 (PAWCIKHRPL…DLINHLSVKR (77 aa)). Residue Ser1926 is modified to O-(pantetheine 4'-phosphoryl)serine. A condensation 2 region spans residues 2001–2285 (PTTVFQDGML…SERLLESQLV (285 aa)). The tract at residues 2464–2869 (TWAKTHPEWK…GRKDEQVKVR (406 aa)) is adenylation 3. Residues 3002 to 3079 (RDLTSIEKQI…ELGRMKNALK (78 aa)) form the Carrier 3 domain. Position 3040 is an O-(pantetheine 4'-phosphoryl)serine (Ser3040). Residues 3121–3530 (CMPLQEVLVA…QMESLVTSFT (410 aa)) form a condensation 3 region. Positions 3564 to 3637 (SVLEQQIRDV…KLATHIQTTS (74 aa)) constitute a Carrier 4 domain. Residue Ser3598 is modified to O-(pantetheine 4'-phosphoryl)serine. A condensation 4 region spans residues 3679–4087 (VYPLTPLQAG…FESIRKHPDE (409 aa)). In terms of domain architecture, Carrier 5 spans 4119–4195 (SAIDQFLDPL…KLCEVAFAKS (77 aa)). Ser4156 is subject to O-(pantetheine 4'-phosphoryl)serine. A condensation 5 region spans residues 4262 to 4589 (WVFKAENGLD…FNAHLNILWN (328 aa)).

This sequence belongs to the NRP synthetase family.

It functions in the pathway siderophore biosynthesis. In terms of biological role, nonribosomal peptide synthetase required for the biosynthetis of epichloenin A, an extracellular siderophore that plays a crucial role in endophyte-grass symbioses. SidN assembles epichloenin A by activating and incorporating three trans-anhydromevalonylhydroxyornithine (trans-AMHO), 1 glutamine and 4 glycine moieties. Trans-AMHO is produced from L-ornithine via 2 steps involving a L-ornithine N(5)-monooxygenase and an AHMO-N(5)-transacylase that have still to be identified. The third adenylation domain (A3) of sidN incorporates the hydroxamate groups of the siderophore which forms an octahedral iron complex. The other component amino acids are assembled by sidN adenylation domains A1 and A2. The protein is Nonribosomal peptide synthetase sidN of Epichloe festucae (strain E2368).